Here is a 119-residue protein sequence, read N- to C-terminus: uncharacterized protein (119 aa).

Residues 1-29 (MKKVGEEEIKQEENEKEKIVKKLNESDVK) are a coiled coil.

This is an uncharacterized protein from Acidianus sp. F28 (AFV-2).